The following is a 160-amino-acid chain: Protein max (160 aa).

Residues 1–13 (MSDNDDIEVESDE) are compositionally biased toward acidic residues. The disordered stretch occupies residues 1-40 (MSDNDDIEVESDEEQPRFQSAADKRAHHNALERKRRDHIK). Serine 2 bears the N-acetylserine mark. A phosphoserine mark is found at serine 2 and serine 11. The bHLH domain occupies 23–74 (DKRAHHNALERKRRDHIKDSFHSLRDSVPSLQGEKASRAQILDKATEYIQYM). Positions 29–40 (NALERKRRDHIK) are enriched in basic and acidic residues. Lysine 66 carries the N6-acetyllysine modification. A leucine-zipper region spans residues 81–102 (HQQDIDDLKRQNALLEQQVRAL). The tract at residues 104–160 (KARSSAQLQTNYPSSDNSLYTNAKGGTISAFDGGSDSSSESEPEEPQSRKKLRMEAS) is disordered. Position 107 is a phosphoserine (serine 107). Positions 107-124 (SSAQLQTNYPSSDNSLYT) are enriched in polar residues. Residues lysine 153 and lysine 154 each carry the N6-acetyllysine modification.

Belongs to the MAX family. In terms of assembly, efficient DNA binding requires dimerization with another bHLH protein. Binds DNA as a heterodimer with MYC or MAD. Part of the E2F6.com-1 complex in G0 phase composed of E2F6, MGA, MAX, TFDP1, CBX3, BAT8, EUHMTASE1, RING1, RNF2, MBLR, L3MBTL2 and YAF2. Component of some MLL1/MLL complex, at least composed of the core components KMT2A/MLL1, ASH2L, HCFC1/HCF1, WDR5 and RBBP5, as well as the facultative components BACC1, CHD8, E2F6, HSP70, INO80C, KANSL1, LAS1L, MAX, MCRS1, MGA, MYST1/MOF, PELP1, PHF20, PRP31, RING2, RUVB1/TIP49A, RUVB2/TIP49B, SENP3, TAF1, TAF4, TAF6, TAF7, TAF9 and TEX10. Interacts with SPAG9. The heterodimer MYC:MAX interacts with ABI1; the interaction may enhance MYC:MAX transcriptional activity. Phosphorylated.

Its subcellular location is the nucleus. It localises to the cell projection. It is found in the dendrite. Functionally, transcription regulator. Forms a sequence-specific DNA-binding protein complex with MYC or MAD which recognizes the core sequence 5'-CAC[GA]TG-3'. The MYC:MAX complex is a transcriptional activator, whereas the MAD:MAX complex is a repressor. CpG methylation of the recognition site greatly inhibits DNA binding, suggesting that DNA methylation may regulate the MYC:MAX complex in vivo. May repress transcription via the recruitment of a chromatin remodeling complex containing H3 'Lys-9' histone methyltransferase activity. Represses MYC transcriptional activity from E-box elements. In Mus musculus (Mouse), this protein is Protein max.